The following is a 457-amino-acid chain: Argininosuccinate lyase (457 aa).

This sequence belongs to the lyase 1 family. Argininosuccinate lyase subfamily.

The protein resides in the cytoplasm. The enzyme catalyses 2-(N(omega)-L-arginino)succinate = fumarate + L-arginine. The protein operates within amino-acid biosynthesis; L-arginine biosynthesis; L-arginine from L-ornithine and carbamoyl phosphate: step 3/3. The chain is Argininosuccinate lyase from Citrobacter koseri (strain ATCC BAA-895 / CDC 4225-83 / SGSC4696).